We begin with the raw amino-acid sequence, 387 residues long: Galactokinase (387 aa).

33-36 is a binding site for substrate; it reads EHTD. ATP is bound by residues serine 67 and 124-130; that span reads GAGLSSS. Mg(2+)-binding residues include serine 130 and glutamate 162. The active-site Proton acceptor is aspartate 174. Substrate is bound at residue tyrosine 224.

It belongs to the GHMP kinase family. GalK subfamily.

It localises to the cytoplasm. It carries out the reaction alpha-D-galactose + ATP = alpha-D-galactose 1-phosphate + ADP + H(+). The protein operates within carbohydrate metabolism; galactose metabolism. Catalyzes the transfer of the gamma-phosphate of ATP to D-galactose to form alpha-D-galactose-1-phosphate (Gal-1-P). The chain is Galactokinase from Lactiplantibacillus plantarum (strain ATCC BAA-793 / NCIMB 8826 / WCFS1) (Lactobacillus plantarum).